A 427-amino-acid chain; its full sequence is Glutamate-1-semialdehyde 2,1-aminomutase (427 aa).

Lys265 is subject to N6-(pyridoxal phosphate)lysine.

It belongs to the class-III pyridoxal-phosphate-dependent aminotransferase family. HemL subfamily. In terms of assembly, homodimer. The cofactor is pyridoxal 5'-phosphate.

The protein resides in the cytoplasm. It carries out the reaction (S)-4-amino-5-oxopentanoate = 5-aminolevulinate. It functions in the pathway porphyrin-containing compound metabolism; protoporphyrin-IX biosynthesis; 5-aminolevulinate from L-glutamyl-tRNA(Glu): step 2/2. The chain is Glutamate-1-semialdehyde 2,1-aminomutase from Pseudomonas putida (strain W619).